Here is a 408-residue protein sequence, read N- to C-terminus: Peptidase T (408 aa).

Histidine 78 is a Zn(2+) binding site. The active site involves aspartate 80. Zn(2+) is bound at residue aspartate 140. The Proton acceptor role is filled by glutamate 173. Glutamate 174, aspartate 196, and histidine 379 together coordinate Zn(2+).

Belongs to the peptidase M20B family. Zn(2+) serves as cofactor.

The protein resides in the cytoplasm. It carries out the reaction Release of the N-terminal residue from a tripeptide.. Its function is as follows. Cleaves the N-terminal amino acid of tripeptides. The polypeptide is Peptidase T (Citrobacter koseri (strain ATCC BAA-895 / CDC 4225-83 / SGSC4696)).